A 335-amino-acid polypeptide reads, in one-letter code: V-set and immunoglobulin domain-containing protein 1 (335 aa).

Residues 1 to 21 (MFPTMLKIFPILATLAGHVHG) form the signal peptide. The Ig-like V-type domain maps to 22-136 (VVVTVPEKTV…SQKSVIVNVL (115 aa)). Residues 22–233 (VVVTVPEKTV…DLTSMHSDGN (212 aa)) lie on the Extracellular side of the membrane. Intrachain disulfides connect Cys-43–Cys-115 and Cys-160–Cys-210. In terms of domain architecture, Ig-like C2-type spans 139 to 226 (PSKPFCKIEG…GNSTCELDLT (88 aa)). Residues 234–254 (IVAGALIGAILAAVIICAIVW) traverse the membrane as a helical segment. Over 255–335 (VLTKKAKKKK…QKEETAGSSF (81 aa)) the chain is Cytoplasmic. Positions 266-335 (SSNEMQVMAQ…QKEETAGSSF (70 aa)) are disordered. Residues 268–306 (NEMQVMAQKQSNAEYAQVPNEENTPATAVLPSNATNEQP) are compositionally biased toward polar residues. A compositionally biased stretch (basic and acidic residues) spans 319-335 (NDEKHEVQKEETAGSSF).

Expressed in thymocytes.

The protein localises to the membrane. In Gallus gallus (Chicken), this protein is V-set and immunoglobulin domain-containing protein 1 (VSIG1).